The following is a 122-amino-acid chain: MNAKAEAKESRFDLLKWLLVAVLVVVAVVGNQYFSAQPILYRVLGILVLAVIAAFLALQTAKGQAFFSLAKEARVEIRKVVWPSRQETTQTTLIVVAVVLVMALLLWGLDSLLGWLVSMIVG.

A run of 3 helical transmembrane segments spans residues 14–34 (LLKW…NQYF), 38–58 (PILY…FLAL), and 93–113 (LIVV…DSLL).

Belongs to the SecE/SEC61-gamma family. Component of the Sec protein translocase complex. Heterotrimer consisting of SecY, SecE and SecG subunits. The heterotrimers can form oligomers, although 1 heterotrimer is thought to be able to translocate proteins. Interacts with the ribosome. Interacts with SecDF, and other proteins may be involved. Interacts with SecA.

It is found in the cell inner membrane. Essential subunit of the Sec protein translocation channel SecYEG. Clamps together the 2 halves of SecY. May contact the channel plug during translocation. The sequence is that of Protein translocase subunit SecE from Pseudomonas aeruginosa (strain ATCC 15692 / DSM 22644 / CIP 104116 / JCM 14847 / LMG 12228 / 1C / PRS 101 / PAO1).